The chain runs to 255 residues: MSITKLADKINEAKAEGRLGLIPFLPGGYPNRDQFWKEILELDEHGADVIEIGMPFSDPVADGPVVEAASLKCLEDGINLKWILAGLSEHRAKISAGVLLMGYYNPVLQYGLEEFAKDASAAGVNGLIIADLPYEEGVEFRDLLAKYDIALIPLVGLNTEADRMALYSKGGNGFCYYVSVLGTTGGTATLPEEIKQGLAKAQEVFDIPVALGFGLKEPSQLKELEGLVDAAVFGSALIKHIDSGKSSAEFMKVWK.

Active-site proton acceptor residues include Glu-51 and Asp-62.

This sequence belongs to the TrpA family. Tetramer of two alpha and two beta chains.

It catalyses the reaction (1S,2R)-1-C-(indol-3-yl)glycerol 3-phosphate + L-serine = D-glyceraldehyde 3-phosphate + L-tryptophan + H2O. It functions in the pathway amino-acid biosynthesis; L-tryptophan biosynthesis; L-tryptophan from chorismate: step 5/5. Its function is as follows. The alpha subunit is responsible for the aldol cleavage of indoleglycerol phosphate to indole and glyceraldehyde 3-phosphate. In Maridesulfovibrio salexigens (strain ATCC 14822 / DSM 2638 / NCIMB 8403 / VKM B-1763) (Desulfovibrio salexigens), this protein is Tryptophan synthase alpha chain.